We begin with the raw amino-acid sequence, 102 residues long: MYAIVKAGGHQEKVEVGDTILVNRLDAKNGETVEFPVALVVDGEKVIIAAADLAKISVKAEVVNDDAKGPKIRIQKFKNKTGVARRKGHRQKLTQLKITAIA.

The protein belongs to the bacterial ribosomal protein bL21 family. As to quaternary structure, part of the 50S ribosomal subunit. Contacts protein L20.

Functionally, this protein binds to 23S rRNA in the presence of protein L20. The sequence is that of Large ribosomal subunit protein bL21 from Bifidobacterium animalis subsp. lactis (strain AD011).